A 279-amino-acid chain; its full sequence is Sarcosine/dimethylglycine N-methyltransferase (279 aa).

This sequence belongs to the methyltransferase superfamily. In terms of assembly, monomer.

The enzyme catalyses sarcosine + 2 S-adenosyl-L-methionine = glycine betaine + 2 S-adenosyl-L-homocysteine + 2 H(+). It carries out the reaction sarcosine + S-adenosyl-L-methionine = N,N-dimethylglycine + S-adenosyl-L-homocysteine + H(+). It catalyses the reaction N,N-dimethylglycine + S-adenosyl-L-methionine = glycine betaine + S-adenosyl-L-homocysteine + H(+). It functions in the pathway amine and polyamine biosynthesis; betaine biosynthesis via glycine pathway; betaine from glycine: step 2/3. It participates in amine and polyamine biosynthesis; betaine biosynthesis via glycine pathway; betaine from glycine: step 3/3. P-chloromercuribenzoate acid inhibits 23% of the SDMT activities on sarcosine and dimethylglycine, and S-adenosylhomocysteine (AdoHcy) inhibits completely GSMT activities. Functionally, catalyzes the methylation of sarcosine and dimethylglycine to dimethylglycine and betaine, respectively, with S-adenosylmethionine (AdoMet) acting as the methyl donor. It has strict specificity for sarcosine and dimethylglycine as the methyl group acceptors. This Halorhodospira halochloris (Ectothiorhodospira halochloris) protein is Sarcosine/dimethylglycine N-methyltransferase.